A 276-amino-acid chain; its full sequence is uncharacterized protein (276 aa).

This is an uncharacterized protein from Fowl adenovirus A serotype 1 (strain CELO / Phelps) (FAdV-1).